The primary structure comprises 59 residues: UPF0434 protein VS_2060 (59 aa).

Belongs to the UPF0434 family.

The sequence is that of UPF0434 protein VS_2060 from Vibrio atlanticus (strain LGP32) (Vibrio splendidus (strain Mel32)).